The chain runs to 2555 residues: Squalestatin hexaketide synthase clz14 (2555 aa).

A disordered region spans residues 1–84; sequence MDVSKEAGHH…PNATSTTTTT (84 aa). Over residues 10-84 the composition is skewed to low complexity; that stretch reads HANGFANGNT…PNATSTTTTT (75 aa). Residues 91–511 enclose the Ketosynthase family 3 (KS3) domain; sequence QVPVAICGIG…GSNTHIIIDS (421 aa). Residues Cys261, His398, and His435 each act as for beta-ketoacyl synthase activity in the active site. A malonyl-CoA:ACP transacylase (MAT) domain region spans residues 611 to 928; that stretch reads FIFTGQGAQW…LEGIGKLFCF (318 aa). Residues 975-1104 form an N-terminal hotdog fold region; it reads HELLGERSLE…GLVTASVVTS (130 aa). The interval 975–1256 is dehydratase (DH) domain; the sequence is HELLGERSLE…RGFKCKKTDD (282 aa). One can recognise a PKS/mFAS DH domain in the interval 975 to 1260; it reads HELLGERSLE…CKKTDDAFIQ (286 aa). His1007 functions as the Proton acceptor; for dehydratase activity in the catalytic mechanism. Residues 1117 to 1260 are C-terminal hotdog fold; sequence SRKVDTSRWY…CKKTDDAFIQ (144 aa). The Proton donor; for dehydratase activity role is filled by Asp1177. The methyltransferase (CMet) domain stretch occupies residues 1424–1595; the sequence is SFFQAAGLNK…GFEGAGTVVL (172 aa). Residues 1821 to 2141 are enoyl reductase (ER) (ER) domain; it reads GMLNTLHWVG…RGVHMGRIVV (321 aa). The segment at 2165-2338 is ketoreductase (KR) domain; that stretch reads STYLLTGGMG…PASVIDIAAI (174 aa). Residues 2468–2546 form the Carrier domain; the sequence is IIFAQEIAKR…SLGRLATKRL (79 aa). Residue Ser2505 is modified to O-(pantetheine 4'-phosphoryl)serine.

It participates in secondary metabolite biosynthesis. Its function is as follows. Highly reducing polyketide synthase (HR-PKS); part of the gene cluster that mediates the biosynthesis of squalestatin S1 (SQS1, also known as zaragozic acid A), a heavily oxidized fungal polyketide that offers potent cholesterol lowering activity by targeting squalene synthase (SS). SQS1 is composed of a 2,8-dioxobicyclic[3.2.1]octane-3,4,5-tricarboxyclic acid core that is connected to two lipophilic polyketide arms. These initial steps feature the priming of an unusual benzoic acid starter unit onto the highly reducing polyketide synthase clz14, followed by oxaloacetate extension and product release to generate a tricarboxylic acid containing product. The phenylalanine ammonia lyase (PAL) clz10 and the acyl-CoA ligase clz12 are involved in transforming phenylalanine into benzoyl-CoA. The citrate synthase-like protein clz17 is involved in connecting the C-alpha-carbons of the hexaketide chain and oxaloacetate to afford the tricarboxylic acid unit. The potential hydrolytic enzymes, clz11 and clz13, are in close proximity to pks2 and may participate in product release. On the other side, the tetraketide arm is synthesized by a the squalestatin tetraketide synthase clz2 and enzymatically esterified to the core in the last biosynthetic step, by the acetyltransferase clz6. The biosynthesis of the tetraketide must involve 3 rounds of chain extension. After the first and second rounds methyl-transfer occurs, and in all rounds of extension the ketoreductase and dehydratase are active. The enoyl reductase and C-MeT of clz2 are not active in the final round of extension. The acetyltransferase clz6 appears to have a broad substrate selectivity for its acyl CoA substrate, allowing the in vitro synthesis of novel squalestatins. The biosynthesis of SQS1 requires several oxidative steps likely performed by oxidoreductases clz3, clz15 and clz16. Finally, in support of the identification of the cluster as being responsible for SQS1 production, the cluster contains a gene encoding a putative squalene synthase (SS) clz20, suggesting a likely mechanism for self-resistance. This chain is Squalestatin hexaketide synthase clz14, found in Cochliobolus lunatus (Filamentous fungus).